A 526-amino-acid polypeptide reads, in one-letter code: MTQQAANALPPVARTYQVRTYGCQMNVHDSERLAGLLEDAGYRRAADGADADVVVFNTCAVRENADNKLYGNLSHLAPRKRSEPQMQIAVGGCLAQKDRDAVLRRAPWVDVVFGTHNIGSLPTLLERARHNRAAQVEIAEALQEFPSTLPAARESAYAGWVSISVGCNNTCTFCIVPSLRGKEVDRRPGDVLAEIQTLVDQGVLEVTLLGQNVNAYGVSFAADERLREDPRMWQSAPHRNRGAFAELLRACGRIDGLERVRFTSPHPAEFTDDVIEAMAETPNVCPALHMPLQSGSDRILRAMRRSYRAEKYLGIIDRVRAAIPDAAITTDLIVGFPGETEEDFQATLDVVAASRFSSAFTFQYSKRPGTPAADMPGQLPKAVVSERYQRLIELQERISLEENQAQVGRTLELLVATGEGRKDAATARLSGRARDGRLVHFAPGAAADEPLARRAFDQVRPGDVVTTTVTGAAPHHLIADGALLTHRRTRAGDAHAAGLRPRTGVGLGIPGVGAPAPAPVTTGCAL.

The MTTase N-terminal domain maps to 14–130; the sequence is RTYQVRTYGC…LPTLLERARH (117 aa). Residues cysteine 23, cysteine 59, cysteine 93, cysteine 167, cysteine 171, and cysteine 174 each contribute to the [4Fe-4S] cluster site. The 249-residue stretch at 153-401 folds into the Radical SAM core domain; the sequence is RESAYAGWVS…IELQERISLE (249 aa). The 80-residue stretch at 404–483 folds into the TRAM domain; it reads QAQVGRTLEL…PHHLIADGAL (80 aa).

Belongs to the methylthiotransferase family. MiaB subfamily. Monomer. Requires [4Fe-4S] cluster as cofactor.

The protein resides in the cytoplasm. The catalysed reaction is N(6)-dimethylallyladenosine(37) in tRNA + (sulfur carrier)-SH + AH2 + 2 S-adenosyl-L-methionine = 2-methylsulfanyl-N(6)-dimethylallyladenosine(37) in tRNA + (sulfur carrier)-H + 5'-deoxyadenosine + L-methionine + A + S-adenosyl-L-homocysteine + 2 H(+). Its function is as follows. Catalyzes the methylthiolation of N6-(dimethylallyl)adenosine (i(6)A), leading to the formation of 2-methylthio-N6-(dimethylallyl)adenosine (ms(2)i(6)A) at position 37 in tRNAs that read codons beginning with uridine. The chain is tRNA-2-methylthio-N(6)-dimethylallyladenosine synthase from Mycobacterium sp. (strain JLS).